The primary structure comprises 323 residues: UPF0612 protein C569.01c (323 aa).

2 coiled-coil regions span residues 27 to 63 and 131 to 225; these read IKRY…MKYE and NEMN…DARS.

It belongs to the UPF0612 family.

The chain is UPF0612 protein C569.01c from Schizosaccharomyces pombe (strain 972 / ATCC 24843) (Fission yeast).